We begin with the raw amino-acid sequence, 221 residues long: Protein DEHYDRATION-INDUCED 19 homolog 2 (221 aa).

2 disordered regions span residues 1 to 24 (MEDD…TAAK) and 162 to 193 (VLPD…SDSD).

Belongs to the Di19 family. Post-translationally, not phosphorylated in vitro by CPK3 or CPK11. Expressed in seedlings, roots, leaves, stems, flowers and siliques.

The protein localises to the cytoplasm. It is found in the nucleus. The polypeptide is Protein DEHYDRATION-INDUCED 19 homolog 2 (DI19-2) (Arabidopsis thaliana (Mouse-ear cress)).